We begin with the raw amino-acid sequence, 230 residues long: MLSSYRHQKKYKKNKAREIGPQLPLWAWKETAFSINQEPYWYSTIRLQGLMWNKRGHKLMFVKENQGYEYWETSGKQWKMEVRRDLDLIAQINFRNAWQYKSQGEWKTIGVWYESPGDYKGKENQFWFHWRIALCSCNKTGWDIREFMIGKHRWDLCKSCIQGEIVKNTNPRSLQRLALLHLAKDHVFQVMPLWRARRVTVQKFSWCRSPMGYTIPWSLQECWEMESIFE.

This sequence belongs to the ovine/caprine lentivirus group Vif protein family.

Its subcellular location is the host cytoplasm. It is found in the virion. This is Virion infectivity factor (vif) from Ovis aries (Sheep).